The following is a 522-amino-acid chain: Putative cysteine ligase BshC (522 aa).

Positions 436–469 (SWAQAEKAKALKQLEDIEKKLRKAEERKHDDVIK) form a coiled coil.

The protein belongs to the BshC family.

This Cytophaga hutchinsonii (strain ATCC 33406 / DSM 1761 / CIP 103989 / NBRC 15051 / NCIMB 9469 / D465) protein is Putative cysteine ligase BshC.